A 513-amino-acid chain; its full sequence is MSNNNYPPPPNPPNYQGEEQVHNVQPDLENNQEKYYAEQPQPSQQFEESFKIDKPKWNDWPFTVFFLLTVAGFIAIAGITLNALKKTYGLQGSSIYNSTDTFTLNTNTIILFGFIIVVGVVLSVLIIVYARMAPRVFITTGLILNIILGLGTCIYYFVAHYYSAAIVFLVFTLFTAWCYWSCRHRIPFSATVLEITIDVMKRYPSTLITSFIGIIVSGLFSTLFSVVIVATYVKYDPDSQGCDVAGGGCSQSKLIGVLVFVFFAGYYISEVIKNVIHITIAGIYGTWYYLSNSDQGEPKHPALGAFKRAMTYCFGSVCFGSLIVSIIQLIRSFVQILKQNAFGSGDNCAGCGFLILDFVLGFIDWIVRYFNHYAYCYVALYGKSYLKSARDTFDLIRFKGMDALINDCFINTSLNLYSMFVGYVVALLAYFYLKFTDPAYNSSGTFYAPVVAFSFLISGQITRIALTVISSGISTFFVALAKDPEVFQMTNRDRFDEIFRNYPQVLQKITSDH.

A compositionally biased stretch (pro residues) spans 1–13 (MSNNNYPPPPNPP). A disordered region spans residues 1–41 (MSNNNYPPPPNPPNYQGEEQVHNVQPDLENNQEKYYAEQPQ). Over 1-60 (MSNNNYPPPPNPPNYQGEEQVHNVQPDLENNQEKYYAEQPQPSQQFEESFKIDKPKWNDW) the chain is Cytoplasmic. The helical transmembrane segment at 61–81 (PFTVFFLLTVAGFIAIAGITL) threads the bilayer. The Extracellular segment spans residues 82 to 108 (NALKKTYGLQGSSIYNSTDTFTLNTNT). N-linked (GlcNAc...) asparagine glycosylation occurs at N97. The helical transmembrane segment at 109–129 (IILFGFIIVVGVVLSVLIIVY) threads the bilayer. At 130–136 (ARMAPRV) the chain is on the cytoplasmic side. Residues 137-157 (FITTGLILNIILGLGTCIYYF) traverse the membrane as a helical segment. Over 158–163 (VAHYYS) the chain is Extracellular. A helical transmembrane segment spans residues 164-182 (AAIVFLVFTLFTAWCYWSC). The Cytoplasmic segment spans residues 183–210 (RHRIPFSATVLEITIDVMKRYPSTLITS). Residues 211–231 (FIGIIVSGLFSTLFSVVIVAT) form a helical membrane-spanning segment. Residues 232-251 (YVKYDPDSQGCDVAGGGCSQ) are Extracellular-facing. The helical transmembrane segment at 252–272 (SKLIGVLVFVFFAGYYISEVI) threads the bilayer. The Cytoplasmic portion of the chain corresponds to 273 to 309 (KNVIHITIAGIYGTWYYLSNSDQGEPKHPALGAFKRA). The helical transmembrane segment at 310–330 (MTYCFGSVCFGSLIVSIIQLI) threads the bilayer. Over 331–346 (RSFVQILKQNAFGSGD) the chain is Extracellular. The helical transmembrane segment at 347 to 367 (NCAGCGFLILDFVLGFIDWIV) threads the bilayer. The Cytoplasmic portion of the chain corresponds to 368–412 (RYFNHYAYCYVALYGKSYLKSARDTFDLIRFKGMDALINDCFINT). The helical transmembrane segment at 413-433 (SLNLYSMFVGYVVALLAYFYL) threads the bilayer. At 434–460 (KFTDPAYNSSGTFYAPVVAFSFLISGQ) the chain is on the extracellular side. N441 is a glycosylation site (N-linked (GlcNAc...) asparagine). A helical membrane pass occupies residues 461 to 481 (ITRIALTVISSGISTFFVALA). The Cytoplasmic segment spans residues 482–513 (KDPEVFQMTNRDRFDEIFRNYPQVLQKITSDH).

This sequence belongs to the CTL (choline transporter-like) family.

The protein resides in the cell membrane. Functionally, probably involved in transport through the plasma membrane. The polypeptide is Protein PNS1 (PNS1) (Debaryomyces hansenii (strain ATCC 36239 / CBS 767 / BCRC 21394 / JCM 1990 / NBRC 0083 / IGC 2968) (Yeast)).